Consider the following 33-residue polypeptide: U1-pseudomyrmecitoxin-Pt1 subunit LS2 (33 aa).

This sequence belongs to the myrmexin family. In terms of assembly, heterodimer composed of subunit LS2 and subunit SS1, heterodimer composed of subunit LS2 and SS2, and heterodimer composed of subunit LS2 and SS3; disulfide-linked. Expressed by the venom gland.

The protein resides in the secreted. Functionally, this heterodimer may have anti-inflammatory properties, since the myrmexin complex (composed of 6 SS-LS heterodimers) inhibits carrageenin-induced edema in a dose-dependent manner (after subcutaneous injection into rats). This is U1-pseudomyrmecitoxin-Pt1 subunit LS2 from Pseudomyrmex triplarinus (Ant).